The chain runs to 145 residues: D-aminoacyl-tRNA deacylase (145 aa).

The short motif at Gly-137 to Pro-138 is the Gly-cisPro motif, important for rejection of L-amino acids element.

The protein belongs to the DTD family. Homodimer.

It is found in the cytoplasm. The catalysed reaction is glycyl-tRNA(Ala) + H2O = tRNA(Ala) + glycine + H(+). It carries out the reaction a D-aminoacyl-tRNA + H2O = a tRNA + a D-alpha-amino acid + H(+). Its function is as follows. An aminoacyl-tRNA editing enzyme that deacylates mischarged D-aminoacyl-tRNAs. Also deacylates mischarged glycyl-tRNA(Ala), protecting cells against glycine mischarging by AlaRS. Acts via tRNA-based rather than protein-based catalysis; rejects L-amino acids rather than detecting D-amino acids in the active site. By recycling D-aminoacyl-tRNA to D-amino acids and free tRNA molecules, this enzyme counteracts the toxicity associated with the formation of D-aminoacyl-tRNA entities in vivo and helps enforce protein L-homochirality. This is D-aminoacyl-tRNA deacylase from Shewanella sp. (strain ANA-3).